The following is a 389-amino-acid chain: Cellobiose 2-epimerase (389 aa).

It belongs to the cellobiose 2-epimerase family. As to quaternary structure, monomer.

The catalysed reaction is D-cellobiose = beta-D-glucosyl-(1-&gt;4)-D-mannopyranose. Its function is as follows. Catalyzes the reversible epimerization of cellobiose to 4-O-beta-D-glucopyranosyl-D-mannose (Glc-Man). Catalyzes epimerization but also isomerization for beta-1,4- and alpha-1,4-gluco-oligosaccharides. Can use cellobiose, lactose, cellotriose, maltose and maltotriose. The polypeptide is Cellobiose 2-epimerase (Dictyoglomus turgidum (strain DSM 6724 / Z-1310)).